The following is a 515-amino-acid chain: Bifunctional purine biosynthesis protein PurH (515 aa).

The MGS-like domain maps to 1-145 (MTKRALISVS…KNHASVTVVV (145 aa)).

This sequence belongs to the PurH family.

It carries out the reaction (6R)-10-formyltetrahydrofolate + 5-amino-1-(5-phospho-beta-D-ribosyl)imidazole-4-carboxamide = 5-formamido-1-(5-phospho-D-ribosyl)imidazole-4-carboxamide + (6S)-5,6,7,8-tetrahydrofolate. The catalysed reaction is IMP + H2O = 5-formamido-1-(5-phospho-D-ribosyl)imidazole-4-carboxamide. It functions in the pathway purine metabolism; IMP biosynthesis via de novo pathway; 5-formamido-1-(5-phospho-D-ribosyl)imidazole-4-carboxamide from 5-amino-1-(5-phospho-D-ribosyl)imidazole-4-carboxamide (10-formyl THF route): step 1/1. It participates in purine metabolism; IMP biosynthesis via de novo pathway; IMP from 5-formamido-1-(5-phospho-D-ribosyl)imidazole-4-carboxamide: step 1/1. The protein is Bifunctional purine biosynthesis protein PurH of Streptococcus gordonii (strain Challis / ATCC 35105 / BCRC 15272 / CH1 / DL1 / V288).